We begin with the raw amino-acid sequence, 256 residues long: Triosephosphate isomerase (256 aa).

Residue 12–14 participates in substrate binding; it reads NWK. The active-site Electrophile is His99. Glu169 (proton acceptor) is an active-site residue. Substrate-binding positions include Gly175, Ser214, and 235 to 236; that span reads GG.

Belongs to the triosephosphate isomerase family. As to quaternary structure, homodimer.

The protein localises to the cytoplasm. It catalyses the reaction D-glyceraldehyde 3-phosphate = dihydroxyacetone phosphate. Its pathway is carbohydrate biosynthesis; gluconeogenesis. It participates in carbohydrate degradation; glycolysis; D-glyceraldehyde 3-phosphate from glycerone phosphate: step 1/1. In terms of biological role, involved in the gluconeogenesis. Catalyzes stereospecifically the conversion of dihydroxyacetone phosphate (DHAP) to D-glyceraldehyde-3-phosphate (G3P). The sequence is that of Triosephosphate isomerase from Rhizobium etli (strain ATCC 51251 / DSM 11541 / JCM 21823 / NBRC 15573 / CFN 42).